The following is a 208-amino-acid chain: uncharacterized protein (208 aa).

Positions 118–134 (QYPNQYQQQPQQQQPGY) are enriched in low complexity. The interval 118 to 208 (QYPNQYQQQP…HKKEKNEIKE (91 aa)) is disordered. Residues 138–175 (NYNQPPVQLNKQAYDNYQQNDYKSNNQPNLAKENNISN) are compositionally biased toward polar residues. The segment covering 187–201 (KKEKKHSFFSKLHKK) has biased composition (basic residues).

This is an uncharacterized protein from Dictyostelium discoideum (Social amoeba).